Here is a 420-residue protein sequence, read N- to C-terminus: Transcription factor TCP4 (420 aa).

A disordered region spans residues Met1–Gly27. The TCP domain maps to Arg45–Leu103. Disordered stretches follow at residues Asn121–Asp176, Leu228–Pro256, His353–Ile379, and Gln399–His420. A compositionally biased stretch (polar residues) spans Lys410–His420.

Interacts with AHL27 and AHL29. Interacts with SPL. Interacts with JGB. Interacts with GI (via N-terminus). Expressed in cotyledons, particularly in the vascular region, in leaves, roots, buds, flowers and immature siliques.

The protein resides in the nucleus. Transcription factor playing a pivotal role in the control of morphogenesis of shoot organs by negatively regulating the expression of boundary-specific genes such as CUC genes, probably through the induction of miRNA (e.g. miR164). Required during early steps of embryogenesis. Participates in ovule development. Activates LOX2 expression by binding to the 5'-GGACCA-3' motif found in its promoter. Activates YUC5 transcription by binding to the 5'-GTGGGCCA-3' motif found in its promoter. Through the activation of YUC5 transcription, integrates the auxin response to a brassinosteroid-dependent molecular circuit that promotes cell elongation in hypocotyls. Activates GIS transcription by binding to the 5'-TGGTCC-3' motif found in its promoter. Involved in the regulation of trichome branching through the activation of GIS transcription. Activates CO transcription by binding to the 5'-GGACCAC-3' motif found in its promoter. Involved in the regulation of photoperiodic flowering through the activation of CO transcription. Activates TCL1 and TCL2 transcription by binding to the 5'-TGGCCA-3' and 5'-GTGGACCA-3' motifS found in their respective promoters. Involved in the suppression of trichome initiaition through the activation of TCL1 and TCL2 transcription. Activates HAT2 transcription by binding to the 5'-TGGTCCAC-3' motif found in its promoter. Through the activation of HAT2 transcription, involved in the auxin-independent reprogramming of mitotic cells to exit division and acquire differentiation competence within the transition zone. The chain is Transcription factor TCP4 (TCP4) from Arabidopsis thaliana (Mouse-ear cress).